A 163-amino-acid polypeptide reads, in one-letter code: D-aminoacyl-tRNA deacylase (163 aa).

Positions 141 to 142 match the Gly-cisPro motif, important for rejection of L-amino acids motif; sequence GP.

This sequence belongs to the DTD family. In terms of assembly, homodimer.

The protein localises to the cytoplasm. It carries out the reaction glycyl-tRNA(Ala) + H2O = tRNA(Ala) + glycine + H(+). It catalyses the reaction a D-aminoacyl-tRNA + H2O = a tRNA + a D-alpha-amino acid + H(+). Its function is as follows. An aminoacyl-tRNA editing enzyme that deacylates mischarged D-aminoacyl-tRNAs. Also deacylates mischarged glycyl-tRNA(Ala), protecting cells against glycine mischarging by AlaRS. Acts via tRNA-based rather than protein-based catalysis; rejects L-amino acids rather than detecting D-amino acids in the active site. By recycling D-aminoacyl-tRNA to D-amino acids and free tRNA molecules, this enzyme counteracts the toxicity associated with the formation of D-aminoacyl-tRNA entities in vivo and helps enforce protein L-homochirality. The sequence is that of D-aminoacyl-tRNA deacylase from Neisseria meningitidis serogroup B (strain ATCC BAA-335 / MC58).